The following is a 161-amino-acid chain: Regulator of ribonuclease activity A (161 aa).

The protein belongs to the RraA family. Homotrimer. Binds to both RNA-binding sites in the C-terminal region of Rne and to RhlB.

The protein localises to the cytoplasm. Globally modulates RNA abundance by binding to RNase E (Rne) and regulating its endonucleolytic activity. Can modulate Rne action in a substrate-dependent manner by altering the composition of the degradosome. Modulates RNA-binding and helicase activities of the degradosome. The protein is Regulator of ribonuclease activity A of Idiomarina loihiensis (strain ATCC BAA-735 / DSM 15497 / L2-TR).